A 596-amino-acid polypeptide reads, in one-letter code: Aspartate--tRNA(Asp/Asn) ligase (596 aa).

Glu175 is an L-aspartate binding site. The segment at 199 to 202 is aspartate; sequence QQYK. L-aspartate contacts are provided by Arg221 and His454. 221 to 223 lines the ATP pocket; that stretch reads RDE. Residue Glu488 participates in ATP binding. Arg495 contributes to the L-aspartate binding site. 540–543 lines the ATP pocket; that stretch reads GVDR.

The protein belongs to the class-II aminoacyl-tRNA synthetase family. Type 1 subfamily. As to quaternary structure, homodimer.

It is found in the cytoplasm. It catalyses the reaction tRNA(Asx) + L-aspartate + ATP = L-aspartyl-tRNA(Asx) + AMP + diphosphate. Aspartyl-tRNA synthetase with relaxed tRNA specificity since it is able to aspartylate not only its cognate tRNA(Asp) but also tRNA(Asn). Reaction proceeds in two steps: L-aspartate is first activated by ATP to form Asp-AMP and then transferred to the acceptor end of tRNA(Asp/Asn). In Bartonella bacilliformis (strain ATCC 35685 / KC583 / Herrer 020/F12,63), this protein is Aspartate--tRNA(Asp/Asn) ligase.